The sequence spans 434 residues: Putative peptidase B (434 aa).

Residues Lys198 and Asp203 each coordinate Mn(2+). Residue Lys210 is part of the active site. 3 residues coordinate Mn(2+): Asp221, Asp280, and Glu282. Arg284 is a catalytic residue.

This sequence belongs to the peptidase M17 family. In terms of assembly, homohexamer. It depends on Mn(2+) as a cofactor.

It is found in the cytoplasm. It carries out the reaction Release of an N-terminal amino acid, Xaa, from a peptide or arylamide. Xaa is preferably Glu or Asp but may be other amino acids, including Leu, Met, His, Cys and Gln.. Functionally, probably plays an important role in intracellular peptide degradation. The polypeptide is Putative peptidase B (Haemophilus influenzae (strain ATCC 51907 / DSM 11121 / KW20 / Rd)).